A 111-amino-acid chain; its full sequence is X antigen family member 3 (111 aa).

Residues 1 to 111 are disordered; that stretch reads MIWRGRSTYR…PEGGDRQPQV (111 aa). Positions 29 to 40 are enriched in acidic residues; that stretch reads PGDEEPQQEEPP. The span at 97–111 shows a compositional bias: basic and acidic residues; sequence EQFKMPEGGDRQPQV.

The protein belongs to the GAGE family.

The chain is X antigen family member 3 (XAGE3) from Homo sapiens (Human).